Reading from the N-terminus, the 330-residue chain is Succinoglycan biosynthesis protein ExoA (330 aa).

The next 3 membrane-spanning stretches (helical) occupy residues 116–136 (ALATGADSVVVAMQTVGFSTF), 260–280 (IAFGALLAIVNWMAVVPVGVW), and 299–319 (YGPLAAVAAMVMHLAWSAGFW).

Belongs to the glycosyltransferase 2 family.

It localises to the cell membrane. The protein operates within glycan metabolism; exopolysaccharide biosynthesis. Its function is as follows. Glycosyltransferase required for the synthesis of succinoglycan (EPS I). Needed for the addition of the second sugar (glucose). Catalyzes the formation of a beta-1,3 linkage with the galactose lipid carrier. The polypeptide is Succinoglycan biosynthesis protein ExoA (exoA) (Rhizobium meliloti (strain 1021) (Ensifer meliloti)).